We begin with the raw amino-acid sequence, 555 residues long: Solute carrier family 22 member 2 (555 aa).

The Cytoplasmic segment spans residues 1–21; it reads MSTVDDILEHIGEFHLFQKQT. A helical transmembrane segment spans residues 22-42; sequence FFLLALLSGAFTPIYVGIVFL. The Extracellular portion of the chain corresponds to 43 to 150; that stretch reads GFTPDHHCWS…LVCAHSWMLD (108 aa). N-linked (GlcNAc...) asparagine glycosylation is present at asparagine 71. Residues 151–171 traverse the membrane as a helical segment; it reads LFQSVVNVGFFIGAMMIGYLA. Over 172–177 the chain is Cytoplasmic; it reads DRFGRK. The chain crosses the membrane as a helical span at residues 178-198; that stretch reads FCLLVTILINAISGALMAISP. At 199–210 the chain is on the extracellular side; the sequence is NYAWMLVFRFLQ. A helical transmembrane segment spans residues 211–231; the sequence is GLVSKAGWLIGYILITEFVGL. The Cytoplasmic portion of the chain corresponds to 232–238; the sequence is GYRRMVG. A helical transmembrane segment spans residues 239–259; it reads ICYQIAFTVGLLILAGVAYVI. Over 260–263 the chain is Extracellular; sequence PNWR. A helical transmembrane segment spans residues 264-284; sequence WLQFAVTLPNFCFLLYFWCIP. A Proline-rich sequence motif is present at residues 284 to 288; it reads PESPR. At 285 to 348 the chain is on the cytoplasmic side; that stretch reads ESPRWLISQN…VRTPQIRKHT (64 aa). A helical transmembrane segment spans residues 349 to 369; it reads LILMYNWFTSSVLYQGLIMHM. Over 370-375 the chain is Extracellular; that stretch reads GLAGDN. The chain crosses the membrane as a helical span at residues 376–396; sequence IYLDFFYSALVEFPAAFIIIL. Residues 397 to 404 lie on the Cytoplasmic side of the membrane; that stretch reads TIDRVGRR. The helical transmembrane segment at 405–425 threads the bilayer; the sequence is YPWAVSNMVAGAACLASVFIP. Over 426–432 the chain is Extracellular; the sequence is DDLQWLK. A helical membrane pass occupies residues 433–453; that stretch reads ITIACLGRMGITMAYEMVCLV. Over 454–464 the chain is Cytoplasmic; sequence NAELYPTYIRN. The chain crosses the membrane as a helical span at residues 465–485; the sequence is LGVLVCSSMCDIGGIITPFLV. The Extracellular segment spans residues 486–494; that stretch reads YRLTDIWME. Residues 495–515 traverse the membrane as a helical segment; the sequence is FPLVVFAVVGLVAGALVLLLP. The Cytoplasmic segment spans residues 516–555; sequence ETKGKALPETIEDAENMQRPRKKKEKRIYLQVKQADRPLS.

Belongs to the major facilitator (TC 2.A.1) superfamily. Organic cation transporter (TC 2.A.1.19) family. Tyrosine phosphorylated. In terms of tissue distribution, expressed in the kidney, in the proximal tubules of cortex and of the outer medulla. In brain, highly expressed predominantly in regions located at the brain-cerebrospinal fluid border, in the leptomeninges, in the choroid plexus and in a layer boarding the third ventricle. In brain, also observed in the granular cell layer of the cerebellum and in the granular layer and pyramidal cells of the hippocampus in the CA1-CA3 regions. Expressed in tracheal and bronchial ciliated epithelium in the respiratory tract. Expression is greater in the kidney of male than of female.

Its subcellular location is the basolateral cell membrane. The protein localises to the basal cell membrane. The protein resides in the apical cell membrane. It carries out the reaction (R)-noradrenaline(out) = (R)-noradrenaline(in). The enzyme catalyses (R)-adrenaline(out) = (R)-adrenaline(in). It catalyses the reaction serotonin(out) = serotonin(in). The catalysed reaction is dopamine(out) = dopamine(in). It carries out the reaction histamine(out) = histamine(in). The enzyme catalyses thiamine(in) = thiamine(out). It catalyses the reaction creatinine(in) = creatinine(out). The catalysed reaction is 1-methylnicotinamide(out) = 1-methylnicotinamide(in). It carries out the reaction guanidine(out) = guanidine(in). The enzyme catalyses choline(out) = choline(in). It catalyses the reaction agmatine(out) = agmatine(in). The catalysed reaction is putrescine(out) = putrescine(in). It carries out the reaction spermidine(in) = spermidine(out). The enzyme catalyses tyramine(in) = tyramine(out). It catalyses the reaction L-histidyl-L-proline diketopiperazine(in) = L-histidyl-L-proline diketopiperazine(out). The catalysed reaction is (R)-salsolinol(in) = (R)-salsolinol(out). It carries out the reaction N-methyl-(R)-salsolinol(in) = N-methyl-(R)-salsolinol(out). The enzyme catalyses acetylcholine(in) = acetylcholine(out). It catalyses the reaction prostaglandin F2alpha(out) = prostaglandin F2alpha(in). The catalysed reaction is prostaglandin E2(out) = prostaglandin E2(in). Its activity is regulated as follows. Tyrosine phosphorylation of the transporter leads to activation of the transport activity. Inhibited by cGMP, most likely through a cGMP-binding protein that interacts with OCT2. Its function is as follows. Electrogenic voltage-dependent transporter that mediates the transport of a variety of organic cations such as endogenous bioactive amines, cationic drugs and xenobiotics. Functions as a Na(+)-independent, bidirectional uniporter. Cation cellular uptake or release is driven by the electrochemical potential, i.e. membrane potential and concentration gradient. However, may also engage electroneutral cation exchange when saturating concentrations of cation substrates are reached. Predominantly expressed at the basolateral membrane of hepatocytes and proximal tubules and involved in the uptake and disposition of cationic compounds by hepatic and renal clearance from the blood flow. Implicated in monoamine neurotransmitters uptake such as histamine, dopamine, adrenaline/epinephrine, noradrenaline/norepinephrine, serotonin and tyramine, thereby supporting a physiological role in the central nervous system by regulating interstitial concentrations of neurotransmitters. Also capable of transporting dopaminergic neuromodulators cyclo(his-pro), salsolinol and N-methyl-salsolinol, thereby involved in the maintenance of dopaminergic cell integrity in the central nervous system. Mediates the bidirectional transport of acetylcholine (ACh) at the apical membrane of ciliated cell in airway epithelium, thereby playing a role in luminal release of ACh from bronchial epithelium. Also transports guanidine and endogenous monoamines such as vitamin B1/thiamine, creatinine and N-1-methylnicotinamide (NMN). Mediates the uptake and efflux of quaternary ammonium compound choline. Mediates the bidirectional transport of polyamine agmatine and the uptake of polyamine putrescine. Able to transport non-amine endogenous compounds such as prostaglandin E2 (PGE2) and prostaglandin F2-alpha (PGF2-alpha). Also involved in the uptake of xenobiotic 4-(4-(dimethylamino)styryl)-N-methylpyridinium (ASP). May contribute to regulate the transport of organic compounds in testis across the blood-testis-barrier. The polypeptide is Solute carrier family 22 member 2 (Rattus norvegicus (Rat)).